A 768-amino-acid polypeptide reads, in one-letter code: MINIEDISKSSNQSEEKQLKSTSSKPKYSFAAKSLFKGSNNITPYYLSTSNTFQCVASESIQTWLLSDDGHIFTSSGNFVLDVSSGGYFVELVQLNSNSKTQIWTIDTTNNKIQNQGNGNYLDIDCFNICVAPLNGNATQQWTTFRRAPIPTGNWGYFQSEQLGSNNYWGLSVLNNSTSYNTSVVMNKVQAKSKGQIWQMTSDGHILSRLDGNLVLDIGPSINGSTTNYYLNTNVYKANDLMQQWGINENNQIFNQYYPNLCIGFVGQLGVDSTVNCVLAQPSSACDTCFQWIANPTYSLNQIVSEVPEPFPAYTSGDLLASYQYLSNDATSNFTDDIRSLYTGINVSLQSFLSIVTNATCPSSIHSTEDFSNVQNQIKTELIYAIDVRLVFENYSGFYSKLFSQGSSNLTNLANLINVDMSSNQMVNANYTDAITSIFYSLISEIPVGGSIIANIGQSAVEFGELMSQSNYQGASTYQVELSQLYTHLNTNYENEMANAQSMKDTILQDWGMMSKTYALCFLPTNDPSSLNMNGLDFEKISDVASVAYEIAMIQMLLPTTYQIYFTSAGYWVPYSDGDFAYSDNSGTYIMATIKYSNSYPPKELTDKLWNNGVSKQEFFLSAYGWNLATSLTYYNTTNQYSNIFKLAFPTIKNFTGVPMQFVMTNDGDNLGNFTVKTHFAKFFSTYYSVGDLGHHYFDIAVTDINKNKVANFTVDIKLKALEGSYVSIKTGSLVVQPGYAVGNPICNQGSYSLMFSASILIPIYKSE.

The segment at 1–22 (MINIEDISKSSNQSEEKQLKST) is disordered. 2 Ricin B-type lectin domains span residues 25 to 145 (KPKY…WTTF) and 116 to 248 (QGNG…WGIN).

It belongs to the cup family.

Its subcellular location is the cytoplasm. The protein resides in the membrane. In terms of biological role, may play an important role in stabilizing and/or regulating the cell membrane during Ca(2+) stress or certain stages of development. This chain is Putative calcium up-regulated protein H (cupH), found in Dictyostelium discoideum (Social amoeba).